Reading from the N-terminus, the 399-residue chain is 4-hydroxy-3-methylbut-2-enyl diphosphate reductase (399 aa).

Cys66 provides a ligand contact to [4Fe-4S] cluster. His96 serves as a coordination point for (2E)-4-hydroxy-3-methylbut-2-enyl diphosphate. Residue His96 participates in dimethylallyl diphosphate binding. An isopentenyl diphosphate-binding site is contributed by His96. Cys157 provides a ligand contact to [4Fe-4S] cluster. Position 185 (His185) interacts with (2E)-4-hydroxy-3-methylbut-2-enyl diphosphate. His185 lines the dimethylallyl diphosphate pocket. His185 contacts isopentenyl diphosphate. Catalysis depends on Glu187, which acts as the Proton donor. Thr250 is a (2E)-4-hydroxy-3-methylbut-2-enyl diphosphate binding site. A [4Fe-4S] cluster-binding site is contributed by Cys288. Ser317, Ser318, Asn319, and Ser380 together coordinate (2E)-4-hydroxy-3-methylbut-2-enyl diphosphate. 4 residues coordinate dimethylallyl diphosphate: Ser317, Ser318, Asn319, and Ser380. Residues Ser317, Ser318, Asn319, and Ser380 each coordinate isopentenyl diphosphate.

This sequence belongs to the IspH family. [4Fe-4S] cluster is required as a cofactor.

The enzyme catalyses isopentenyl diphosphate + 2 oxidized [2Fe-2S]-[ferredoxin] + H2O = (2E)-4-hydroxy-3-methylbut-2-enyl diphosphate + 2 reduced [2Fe-2S]-[ferredoxin] + 2 H(+). The catalysed reaction is dimethylallyl diphosphate + 2 oxidized [2Fe-2S]-[ferredoxin] + H2O = (2E)-4-hydroxy-3-methylbut-2-enyl diphosphate + 2 reduced [2Fe-2S]-[ferredoxin] + 2 H(+). It functions in the pathway isoprenoid biosynthesis; dimethylallyl diphosphate biosynthesis; dimethylallyl diphosphate from (2E)-4-hydroxy-3-methylbutenyl diphosphate: step 1/1. It participates in isoprenoid biosynthesis; isopentenyl diphosphate biosynthesis via DXP pathway; isopentenyl diphosphate from 1-deoxy-D-xylulose 5-phosphate: step 6/6. In terms of biological role, catalyzes the conversion of 1-hydroxy-2-methyl-2-(E)-butenyl 4-diphosphate (HMBPP) into a mixture of isopentenyl diphosphate (IPP) and dimethylallyl diphosphate (DMAPP). Acts in the terminal step of the DOXP/MEP pathway for isoprenoid precursor biosynthesis. In Synechococcus sp. (strain CC9605), this protein is 4-hydroxy-3-methylbut-2-enyl diphosphate reductase.